We begin with the raw amino-acid sequence, 434 residues long: G2/mitotic-specific cyclin-2 (434 aa).

This sequence belongs to the cyclin family. Cyclin AB subfamily. In terms of assembly, interacts with the CDC2 protein kinase to form a serine/threonine kinase holoenzyme complex also known as maturation promoting factor (MPF). The cyclin subunit imparts substrate specificity to the complex.

Functionally, essential for the control of the cell cycle at the G2/M (mitosis) transition. In Medicago sativa subsp. varia (Alfalfa), this protein is G2/mitotic-specific cyclin-2.